The primary structure comprises 351 residues: MATWLVTGGAGFIGGNFVLEAVSRGIRVVNLDALTYAGNLNTLASLEGNADHIFVKGDIGDGALVTRLLQEHQPDAVLNFAAESHVDRSIEGPGAFIQTNVVGTLALLEAVRDYWKALPDTRRDAFRFLHVSTDEVYGTLGETGKFTETTPYAPNSPYSASKAASDHLVRAFHHTYGLPVLTTNCSNNYGPYHFPEKLIPLVIAKALAGEPLPVYGDGKQVRDWLFVSDHCEAIRTVLAKGRVGETYNVGGNSERQNIEVVQAICALLDQHRPREDGKPRESQIAYVTDRPGHDRRYAIDASKLKDELGWEPAYTFEQGIALTVDWYLTNQTWVQGVLDGSYRLERIGATV.

NAD(+) contacts are provided by residues 12-13, 32-35, 58-59, 80-84, and Thr-99; these read FI, DALT, DI, and FAAES. Position 84 (Ser-84) interacts with substrate. Substrate is bound at residue Thr-133. Catalysis depends on Asp-134, which acts as the Proton donor. Catalysis depends on proton acceptor residues Glu-135 and Tyr-158. 158–162 contacts NAD(+); it reads YSASK. Asn-187 lines the substrate pocket. An NAD(+)-binding site is contributed by Asn-188. Residues 197-198, 213-215, Arg-222, Asn-257, and 289-293 contribute to the substrate site; these read KL, PVY, and DRPGH.

This sequence belongs to the NAD(P)-dependent epimerase/dehydratase family. dTDP-glucose dehydratase subfamily. Homodimer. NAD(+) is required as a cofactor.

The enzyme catalyses dTDP-alpha-D-glucose = dTDP-4-dehydro-6-deoxy-alpha-D-glucose + H2O. It participates in carbohydrate biosynthesis; dTDP-L-rhamnose biosynthesis. It functions in the pathway bacterial outer membrane biogenesis; LPS O-antigen biosynthesis. Catalyzes the dehydration of dTDP-D-glucose to form dTDP-6-deoxy-D-xylo-4-hexulose via a three-step process involving oxidation, dehydration and reduction. The polypeptide is dTDP-glucose 4,6-dehydratase (rfbB) (Xanthomonas campestris pv. campestris (strain B100)).